Reading from the N-terminus, the 121-residue chain is Basic phospholipase A2 VRV-PL-VIIIa (121 aa).

7 disulfides stabilise this stretch: Cys26-Cys115, Cys28-Cys44, Cys43-Cys95, Cys49-Cys121, Cys50-Cys88, Cys57-Cys81, and Cys75-Cys86. Positions 27, 29, and 31 each coordinate Ca(2+). The active site involves His47. Asp48 provides a ligand contact to Ca(2+). Asp89 is an active-site residue.

The protein belongs to the phospholipase A2 family. Group II subfamily. D49 sub-subfamily. In terms of assembly, monomer. The cofactor is Ca(2+). In terms of tissue distribution, expressed by the venom gland.

The protein localises to the secreted. The catalysed reaction is a 1,2-diacyl-sn-glycero-3-phosphocholine + H2O = a 1-acyl-sn-glycero-3-phosphocholine + a fatty acid + H(+). With respect to regulation, oxyphenbutazone (OPB), anisic acid and atropine inhibit the enzymatic activity by binding at the substrate-binding site. P-coumaric acid, resveratrol, spermidine, corticosterone and gramine derivative inhibit the enzymatic activity by binding at the substrate-binding site. Its function is as follows. Snake venom phospholipase A2 (PLA2) that shows weak neurotoxicity and medium anticoagulant effects by binding to factor Xa (F10) and inhibiting the prothrombinase activity (IC(50) is 130 nM). It also damages vital organs such as lung, liver and kidney, displays edema-inducing activities when injected into the foot pads of mice and induces necrosis of muscle cells when injected into the thigh muscle. Has a low enzymatic activity. PLA2 catalyzes the calcium-dependent hydrolysis of the 2-acyl groups in 3-sn-phosphoglycerides. This is Basic phospholipase A2 VRV-PL-VIIIa from Daboia russelii (Russel's viper).